Consider the following 451-residue polypeptide: Phosphoglucosamine mutase (451 aa).

The Phosphoserine intermediate role is filled by Ser-102. Residues Ser-102, Asp-243, Asp-245, and Asp-247 each coordinate Mg(2+). Ser-102 carries the post-translational modification Phosphoserine.

It belongs to the phosphohexose mutase family. Mg(2+) serves as cofactor. Activated by phosphorylation.

It carries out the reaction alpha-D-glucosamine 1-phosphate = D-glucosamine 6-phosphate. Its function is as follows. Catalyzes the conversion of glucosamine-6-phosphate to glucosamine-1-phosphate. The sequence is that of Phosphoglucosamine mutase from Brucella canis (strain ATCC 23365 / NCTC 10854 / RM-666).